We begin with the raw amino-acid sequence, 156 residues long: Small ribosomal subunit protein uS7 (156 aa).

It belongs to the universal ribosomal protein uS7 family. In terms of assembly, part of the 30S ribosomal subunit. Contacts proteins S9 and S11.

One of the primary rRNA binding proteins, it binds directly to 16S rRNA where it nucleates assembly of the head domain of the 30S subunit. Is located at the subunit interface close to the decoding center, probably blocks exit of the E-site tRNA. This Vibrio cholerae serotype O1 (strain ATCC 39315 / El Tor Inaba N16961) protein is Small ribosomal subunit protein uS7.